The primary structure comprises 419 residues: Septin-2 (419 aa).

The Septin-type G domain occupies 40 to 306 (NGFVFNVMCI…ELYRQKRLEQ (267 aa)). The tract at residues 50-57 (GETGLGKS) is G1 motif. Residues 50–57 (GETGLGKS), serine 79, glycine 105, 186–194 (KADTISKVE), glycine 240, and arginine 255 each bind GTP. The tract at residues 102 to 105 (DTVG) is G3 motif. A G4 motif region spans residues 185–188 (AKAD). Positions 259-269 (WGTVQVENETH) are important for dimerization.

It belongs to the TRAFAC class TrmE-Era-EngA-EngB-Septin-like GTPase superfamily. Septin GTPase family. As to quaternary structure, may assemble into a multicomponent structure.

It is found in the cytoplasm. The protein localises to the cytoskeleton. The protein resides in the spindle. Functionally, involved in cytokinesis. The chain is Septin-2 from Drosophila melanogaster (Fruit fly).